The following is an 873-amino-acid chain: Leucine--tRNA ligase (873 aa).

A 'HIGH' region motif is present at residues Pro42–His52. Residues Pro624–Pro643 are disordered. The short motif at Lys632 to Ser636 is the 'KMSKS' region element. An ATP-binding site is contributed by Lys635.

It belongs to the class-I aminoacyl-tRNA synthetase family.

The protein resides in the cytoplasm. The catalysed reaction is tRNA(Leu) + L-leucine + ATP = L-leucyl-tRNA(Leu) + AMP + diphosphate. The polypeptide is Leucine--tRNA ligase (Pseudomonas aeruginosa (strain LESB58)).